A 66-amino-acid polypeptide reads, in one-letter code: MDPPARKEKPKVKEPVSRIEKAKQKSAQQELKQRQRAEIYALNRVMTELEQQQFDEFCKQMQPPGE.

The span at 1–23 (MDPPARKEKPKVKEPVSRIEKAK) shows a compositional bias: basic and acidic residues. Positions 1–32 (MDPPARKEKPKVKEPVSRIEKAKQKSAQQELK) are disordered. Residues 5 to 52 (ARKEKPKVKEPVSRIEKAKQKSAQQELKQRQRAEIYALNRVMTELEQQ) are a coiled coil.

Belongs to the SVBP family. Interacts with VASH1 and VASH2.

The protein resides in the cytoplasm. It localises to the secreted. Its subcellular location is the cytoskeleton. In terms of biological role, enhances the tyrosine carboxypeptidase activity of VASH1 and VASH2, thereby promoting the removal of the C-terminal tyrosine residue of alpha-tubulin. Also required to enhance the solubility and secretion of VASH1 and VASH2. Plays a role in axon and excitatory synapse formation. This Bos taurus (Bovine) protein is Small vasohibin-binding protein.